We begin with the raw amino-acid sequence, 732 residues long: Polyribonucleotide nucleotidyltransferase (732 aa).

The Mg(2+) site is built by Asp-502 and Asp-508. Positions 569–628 (PRLTSIQIPVDAIGMVIGKGGETIRSITEETGAEINIDDDGTVTIACSSPEGTKAAVETI) constitute a KH domain. One can recognise an S1 motif domain in the interval 638–712 (GTIYMGKVRD…GKTKFALSIK (75 aa)).

The protein belongs to the polyribonucleotide nucleotidyltransferase family. The cofactor is Mg(2+).

The protein resides in the cytoplasm. The catalysed reaction is RNA(n+1) + phosphate = RNA(n) + a ribonucleoside 5'-diphosphate. Its function is as follows. Involved in mRNA degradation. Catalyzes the phosphorolysis of single-stranded polyribonucleotides processively in the 3'- to 5'-direction. This Chlorobaculum parvum (strain DSM 263 / NCIMB 8327) (Chlorobium vibrioforme subsp. thiosulfatophilum) protein is Polyribonucleotide nucleotidyltransferase.